The primary structure comprises 329 residues: Malate dehydrogenase (329 aa).

12-18 lines the NAD(+) pocket; the sequence is GAAGQIG. Residues arginine 93 and arginine 99 each coordinate substrate. NAD(+) contacts are provided by residues asparagine 106, glutamine 113, and 130 to 132; that span reads TGN. Substrate contacts are provided by asparagine 132 and arginine 163. Histidine 188 (proton acceptor) is an active-site residue.

This sequence belongs to the LDH/MDH superfamily. MDH type 2 family.

The catalysed reaction is (S)-malate + NAD(+) = oxaloacetate + NADH + H(+). Functionally, catalyzes the reversible oxidation of malate to oxaloacetate. This Mycobacterium bovis (strain ATCC BAA-935 / AF2122/97) protein is Malate dehydrogenase.